A 972-amino-acid polypeptide reads, in one-letter code: 116 kDa U5 small nuclear ribonucleoprotein component (972 aa).

Methionine 1 carries the N-acetylmethionine modification. Positions 1 to 54 (MDTDLYDEFGNYIGPELDSDEDDDELGRETKDLDEMDDDDDDDDVGDHDDDHPG) are disordered. Acidic residues-rich tracts occupy residues 17–26 (LDSDEDDDEL) and 34–48 (DEMD…VGDH). Position 19 is a phosphoserine (serine 19). Lysine 64 participates in a covalent cross-link: Glycyl lysine isopeptide (Lys-Gly) (interchain with G-Cter in SUMO1); alternate. A Glycyl lysine isopeptide (Lys-Gly) (interchain with G-Cter in SUMO2); alternate cross-link involves residue lysine 64. Phosphothreonine is present on threonine 86. The 283-residue stretch at 127-409 (ELIRNVTLCG…GIHLTKEELK (283 aa)) folds into the tr-type G domain. Residues 136–143 (GHLHHGKT), 204–208 (DTPGH), and 258–261 (NKID) contribute to the GTP site.

It belongs to the TRAFAC class translation factor GTPase superfamily. Classic translation factor GTPase family. EF-G/EF-2 subfamily. In terms of assembly, component of the U5 snRNP and the U4/U6-U5 tri-snRNP complex, a building block of the spliceosome. The U4/U6-U5 tri-snRNP complex is composed of the U4, U6 and U5 snRNAs and at least PRPF3, PRPF4, PRPF6, PRPF8, PRPF31, SNRNP200, TXNL4A, SNRNP40, DDX23, CD2BP2, PPIH, SNU13, EFTUD2, SART1 and USP39. Component of the pre-catalytic, catalytic and post-catalytic spliceosome complexes. Component of the minor spliceosome, which splices U12-type introns. Within this complex, interacts with CRIPT. Interacts with ERBB4 and PRPF8. Interacts with PIH1D1. Interacts with RPAP3 and URI1 in a ZNHIT2-dependent manner. Interacts with NRDE2. Interacts with FAM50A. Interacts with UBL5.

It is found in the nucleus. Functionally, required for pre-mRNA splicing as component of the spliceosome, including pre-catalytic, catalytic and post-catalytic spliceosomal complexes. Component of the U5 snRNP and the U4/U6-U5 tri-snRNP complex, a building block of the spliceosome. As a component of the minor spliceosome, involved in the splicing of U12-type introns in pre-mRNAs. This Homo sapiens (Human) protein is 116 kDa U5 small nuclear ribonucleoprotein component (EFTUD2).